A 360-amino-acid polypeptide reads, in one-letter code: Peptide chain release factor 1 (360 aa).

At Gln-237 the chain carries N5-methylglutamine.

It belongs to the prokaryotic/mitochondrial release factor family. Post-translationally, methylated by PrmC. Methylation increases the termination efficiency of RF1.

It is found in the cytoplasm. Peptide chain release factor 1 directs the termination of translation in response to the peptide chain termination codons UAG and UAA. The protein is Peptide chain release factor 1 of Pseudomonas savastanoi pv. phaseolicola (strain 1448A / Race 6) (Pseudomonas syringae pv. phaseolicola (strain 1448A / Race 6)).